Consider the following 94-residue polypeptide: ESAT-6-like protein EsxO (94 aa).

It belongs to the WXG100 family. ESAT-6 subfamily. As to quaternary structure, forms a complex with EsxP.

The protein localises to the secreted. This Mycobacterium tuberculosis (strain CDC 1551 / Oshkosh) protein is ESAT-6-like protein EsxO.